The sequence spans 1404 residues: DNA-directed RNA polymerase subunit beta' (1404 aa).

Positions 70, 72, 85, and 88 each coordinate Zn(2+). The Mg(2+) site is built by aspartate 460, aspartate 462, and aspartate 464. 4 residues coordinate Zn(2+): cysteine 814, cysteine 888, cysteine 895, and cysteine 898.

This sequence belongs to the RNA polymerase beta' chain family. The RNAP catalytic core consists of 2 alpha, 1 beta, 1 beta' and 1 omega subunit. When a sigma factor is associated with the core the holoenzyme is formed, which can initiate transcription. It depends on Mg(2+) as a cofactor. The cofactor is Zn(2+).

The catalysed reaction is RNA(n) + a ribonucleoside 5'-triphosphate = RNA(n+1) + diphosphate. DNA-dependent RNA polymerase catalyzes the transcription of DNA into RNA using the four ribonucleoside triphosphates as substrates. The protein is DNA-directed RNA polymerase subunit beta' of Shewanella loihica (strain ATCC BAA-1088 / PV-4).